Consider the following 394-residue polypeptide: S-adenosylmethionine synthase (394 aa).

Residue His-16 participates in ATP binding. Asp-18 provides a ligand contact to Mg(2+). K(+) is bound at residue Glu-44. The L-methionine site is built by Glu-57 and Gln-99. Positions 99–109 (QSPDIAQGVDE) are flexible loop. Residues 173–175 (DAK), 240–241 (RF), Asp-249, 255–256 (RK), Ala-272, and Lys-276 contribute to the ATP site. Asp-249 contacts L-methionine. Residue Lys-280 coordinates L-methionine.

It belongs to the AdoMet synthase family. As to quaternary structure, homotetramer; dimer of dimers. The cofactor is Mg(2+). It depends on K(+) as a cofactor.

It localises to the cytoplasm. The catalysed reaction is L-methionine + ATP + H2O = S-adenosyl-L-methionine + phosphate + diphosphate. It functions in the pathway amino-acid biosynthesis; S-adenosyl-L-methionine biosynthesis; S-adenosyl-L-methionine from L-methionine: step 1/1. Its function is as follows. Catalyzes the formation of S-adenosylmethionine (AdoMet) from methionine and ATP. The overall synthetic reaction is composed of two sequential steps, AdoMet formation and the subsequent tripolyphosphate hydrolysis which occurs prior to release of AdoMet from the enzyme. This is S-adenosylmethionine synthase from Lacticaseibacillus paracasei (strain ATCC 334 / BCRC 17002 / CCUG 31169 / CIP 107868 / KCTC 3260 / NRRL B-441) (Lactobacillus paracasei).